The following is a 189-amino-acid chain: Interferon alpha-1/13 (189 aa).

An N-terminal signal peptide occupies residues 1 to 23 (MASPFALLMVLVVLSCKSSCSLG). Disulfide bonds link C24-C122 and C52-C162.

This sequence belongs to the alpha/beta interferon family. In terms of assembly, interacts with CR2.

The protein resides in the secreted. In terms of biological role, produced by macrophages, IFN-alpha have antiviral activities. Interferon stimulates the production of two enzymes: a protein kinase and an oligoadenylate synthetase. This is Interferon alpha-1/13 (IFNA1) from Homo sapiens (Human).